A 454-amino-acid polypeptide reads, in one-letter code: Mitochondrial dynamics protein MID49 (454 aa).

Residues 1 to 22 (MAEFSQKRGKRRSDEGLGSMVD) are Mitochondrial intermembrane-facing. S13 bears the Phosphoserine mark. A helical membrane pass occupies residues 23–43 (FLLANARLVLGVGGAAVLGIA). Residues 44–454 (TLAVKRFIDR…SGLQEPEGLL (411 aa)) are Cytoplasmic-facing. The interval 76–119 (ATPHLQPRPPPAALSQPVLPLAPSSSAPEGPAETDPEVTPQLSS) is disordered. Low complexity predominate over residues 88–103 (ALSQPVLPLAPSSSAP).

It belongs to the MID49/MID51 family. As to quaternary structure, interacts with DNM1L. In terms of tissue distribution, expressed in all tissues tested with highest expression in heart and skeletal muscle.

It localises to the mitochondrion outer membrane. Its function is as follows. Mitochondrial outer membrane protein involved in the regulation of mitochondrial organization. It is required for mitochondrial fission and promotes the recruitment and association of the fission mediator dynamin-related protein 1 (DNM1L) to the mitochondrial surface independently of the mitochondrial fission FIS1 and MFF proteins. Regulates DNM1L GTPase activity. The chain is Mitochondrial dynamics protein MID49 (MIEF2) from Homo sapiens (Human).